Reading from the N-terminus, the 90-residue chain is Probable acyl carrier protein (90 aa).

The region spanning 9–90 (QVTVEELSAL…LVNGALKTGV (82 aa)) is the Carrier domain. Serine 47 is modified (O-(pantetheine 4'-phosphoryl)serine).

Post-translationally, 4'-phosphopantetheine is transferred from CoA to a specific serine of the apo-ACP-like protein.

Its function is as follows. Involved in developmentally regulated synthesis of a compound biosynthetically related to polyketide antibiotics which is essential for spore color in Streptomyces coelicolor. This chain is Probable acyl carrier protein, found in Streptomyces coelicolor (strain ATCC BAA-471 / A3(2) / M145).